Here is an 88-residue protein sequence, read N- to C-terminus: Small ribosomal subunit protein uS15c (88 aa).

This sequence belongs to the universal ribosomal protein uS15 family. In terms of assembly, part of the 30S ribosomal subunit.

Its subcellular location is the plastid. It is found in the chloroplast. This is Small ribosomal subunit protein uS15c (rps15) from Physcomitrium patens (Spreading-leaved earth moss).